The chain runs to 904 residues: Disintegrin and metalloproteinase domain-containing protein 22 (904 aa).

The first 23 residues, 1–23, serve as a signal peptide directing secretion; it reads MQAAAAASFWLLCVLGTCPLARC. Positions 24 to 223 are excised as a propeptide; sequence GRAGVASLKG…LKPRLKRRKR (200 aa). Residues 24 to 734 lie on the Extracellular side of the membrane; that stretch reads GRAGVASLKG…LSGNGVAGTN (711 aa). An N-linked (GlcNAc...) asparagine glycan is attached at N163. A Peptidase M12B domain is found at 237–436; sequence KYIELMIVND…GGGACLFNKP (200 aa). Disulfide bonds link C347–C431, C390–C415, C392–C399, C445–C475, C456–C472, C458–C464, C471–C492, C483–C489, C488–C514, C501–C521, C508–C540, C533–C545, C552–C603, C567–C633, C581–C591, C598–C661, and C655–C666. The region spanning 442–529 is the Disintegrin domain; that stretch reads PPECGNGFIE…QCAPNVHKMD (88 aa). N517 carries N-linked (GlcNAc...) asparagine glycosylation. N632 is a glycosylation site (N-linked (GlcNAc...) asparagine). N673 carries an N-linked (GlcNAc...) asparagine glycan. The EGF-like domain maps to 673-710; it reads NFSTCSSSKAGTVCSGNGVCSNELKCVCNRHWTGADCG. 3 disulfides stabilise this stretch: C677–C692, C686–C698, and C700–C709. Residues 735-755 traverse the membrane as a helical segment; it reads IIIGIIAGTILVLALILGITA. The Cytoplasmic segment spans residues 756-857; it reads WGYKNYREQR…RFRPRSNSTE (102 aa). Residues 769 to 904 are disordered; it reads QGDYVKKPGD…QSARLWETSI (136 aa). Low complexity predominate over residues 789–808; it reads GGSTNSASSSKKRSNGLSHS. Phosphoserine is present on residues S808, K817, and S832. A compositionally biased stretch (basic and acidic residues) spans 809-827; that stretch reads WSERIPDTKHISDICENGR. Residues 840 to 851 are compositionally biased toward basic residues; sequence NKKKIRGKRFRP. A phosphoserine mark is found at S855, S860, S864, S868, and M882. The span at 860 to 875 shows a compositional bias: low complexity; the sequence is SPAKSPSSSTGSIASS.

In terms of assembly, interacts with LGI1. Can bind to LGI4. Interacts with KCNA2, DLG2 and DLG4. Interacts with ADAM11. Interacts (via C-terminus) with YWHAB/14-3-3 beta. Interacts (via C-terminus) with YWHAZ/14-3-3 zeta. The precursor is cleaved by a furin endopeptidase. Detected in juxtaparanodal zones in the central nervous system and at nerve terminal plexuses of basket cells in the cerebellum (at protein level). Expressed at high levels in the brain. Strongly expressed in cerebellar granule cells and hippocampus. In spinal cord, expression is restricted to gray matter.

The protein resides in the cell membrane. The protein localises to the cell projection. Its subcellular location is the axon. Its function is as follows. Probable ligand for integrin in the brain. This is a non catalytic metalloprotease-like protein. Involved in regulation of cell adhesion and spreading and in inhibition of cell proliferation. Neuronal receptor for LGI1. The chain is Disintegrin and metalloproteinase domain-containing protein 22 (Adam22) from Mus musculus (Mouse).